We begin with the raw amino-acid sequence, 603 residues long: Elongation factor 4 (603 aa).

Positions 7–189 (SRIRNFSIIA…SIVHLVPPPQ (183 aa)) constitute a tr-type G domain. Residues 19 to 24 (DHGKST) and 136 to 139 (NKID) contribute to the GTP site.

The protein belongs to the TRAFAC class translation factor GTPase superfamily. Classic translation factor GTPase family. LepA subfamily.

It is found in the cell inner membrane. The catalysed reaction is GTP + H2O = GDP + phosphate + H(+). Required for accurate and efficient protein synthesis under certain stress conditions. May act as a fidelity factor of the translation reaction, by catalyzing a one-codon backward translocation of tRNAs on improperly translocated ribosomes. Back-translocation proceeds from a post-translocation (POST) complex to a pre-translocation (PRE) complex, thus giving elongation factor G a second chance to translocate the tRNAs correctly. Binds to ribosomes in a GTP-dependent manner. In Rippkaea orientalis (strain PCC 8801 / RF-1) (Cyanothece sp. (strain PCC 8801)), this protein is Elongation factor 4.